The following is a 170-amino-acid chain: Protein SprT (170 aa).

Residues 22 to 165 (LQLANQHLGT…RQCGEKLQFI (144 aa)) enclose the SprT-like domain. His78 contacts Zn(2+). Residue Glu79 is part of the active site. Residue His82 participates in Zn(2+) binding.

Belongs to the SprT family. The cofactor is Zn(2+).

The protein localises to the cytoplasm. This is Protein SprT from Yersinia pseudotuberculosis serotype IB (strain PB1/+).